We begin with the raw amino-acid sequence, 508 residues long: Photosystem II CP47 reaction center protein (508 aa).

6 helical membrane passes run 21–36, 101–115, 140–156, 203–218, 237–252, and 457–472; these read AVHI…WAGS, IILS…IWHW, GIHL…FGAF, IAAG…FHLS, VLSS…AFVV, and NFAL…HGGR.

It belongs to the PsbB/PsbC family. PsbB subfamily. PSII is composed of 1 copy each of membrane proteins PsbA, PsbB, PsbC, PsbD, PsbE, PsbF, PsbH, PsbI, PsbJ, PsbK, PsbL, PsbM, PsbT, PsbX, PsbY, PsbZ, Psb30/Ycf12, at least 3 peripheral proteins of the oxygen-evolving complex and a large number of cofactors. It forms dimeric complexes. Binds multiple chlorophylls. PSII binds additional chlorophylls, carotenoids and specific lipids. is required as a cofactor.

It localises to the plastid. The protein localises to the chloroplast thylakoid membrane. Its function is as follows. One of the components of the core complex of photosystem II (PSII). It binds chlorophyll and helps catalyze the primary light-induced photochemical processes of PSII. PSII is a light-driven water:plastoquinone oxidoreductase, using light energy to abstract electrons from H(2)O, generating O(2) and a proton gradient subsequently used for ATP formation. The polypeptide is Photosystem II CP47 reaction center protein (Chaetosphaeridium globosum (Charophycean green alga)).